The following is a 119-amino-acid chain: ATP-dependent Clp protease adapter protein ClpS (119 aa).

The protein belongs to the ClpS family. In terms of assembly, binds to the N-terminal domain of the chaperone ClpA.

Its function is as follows. Involved in the modulation of the specificity of the ClpAP-mediated ATP-dependent protein degradation. In Marinobacter nauticus (strain ATCC 700491 / DSM 11845 / VT8) (Marinobacter aquaeolei), this protein is ATP-dependent Clp protease adapter protein ClpS.